We begin with the raw amino-acid sequence, 494 residues long: Glutamate--tRNA ligase (494 aa).

The 'HIGH' region signature appears at 9–19; the sequence is PSPTGPLHIGS. A 'KMSKS' region motif is present at residues 249–253; sequence KLSKR. Lys-252 lines the ATP pocket.

This sequence belongs to the class-I aminoacyl-tRNA synthetase family. Glutamate--tRNA ligase type 1 subfamily. Monomer.

The protein resides in the cytoplasm. The catalysed reaction is tRNA(Glu) + L-glutamate + ATP = L-glutamyl-tRNA(Glu) + AMP + diphosphate. Its function is as follows. Catalyzes the attachment of glutamate to tRNA(Glu) in a two-step reaction: glutamate is first activated by ATP to form Glu-AMP and then transferred to the acceptor end of tRNA(Glu). The polypeptide is Glutamate--tRNA ligase (Azobacteroides pseudotrichonymphae genomovar. CFP2).